The sequence spans 30 residues: 80 kDa carcinoembryonic antigen-binding protein (30 aa).

Binds to carcinoembryonic antigen (CEA). In terms of processing, the N-terminus is blocked.

It localises to the cell membrane. Functionally, may play a role in the development of hepatic metastases from colorectal cancers. In Rattus norvegicus (Rat), this protein is 80 kDa carcinoembryonic antigen-binding protein.